Reading from the N-terminus, the 311-residue chain is UDP-N-acetylenolpyruvoylglucosamine reductase (311 aa).

An FAD-binding PCMH-type domain is found at 34–198; the sequence is MGGAADLFIT…LEGTFRLQKG (165 aa). The active site involves arginine 177. The Proton donor role is filled by serine 227. Glutamate 297 is a catalytic residue.

It belongs to the MurB family. Requires FAD as cofactor.

The protein localises to the cytoplasm. It catalyses the reaction UDP-N-acetyl-alpha-D-muramate + NADP(+) = UDP-N-acetyl-3-O-(1-carboxyvinyl)-alpha-D-glucosamine + NADPH + H(+). It participates in cell wall biogenesis; peptidoglycan biosynthesis. In terms of biological role, cell wall formation. In Shouchella clausii (strain KSM-K16) (Alkalihalobacillus clausii), this protein is UDP-N-acetylenolpyruvoylglucosamine reductase.